A 374-amino-acid chain; its full sequence is MKLLGLYINIPWPTKRYKYHDFKFPEYKKKINEKKYIHHLLQDLKKDSLLVPNRTINTIFIGGIAPNFFKLTSIKYLLKKIKNIIPISKNAENTIEFHISKLSEKKIFYYKKFGINRFSIRIQTFDQKKFNSLSKVHISKNILHKIKKINIEKFKNINLDLIYGLPKQSLQEALLDLKTAISLKPNHISWCEFYIEKNNNNYKNLSKSCNLNIIWKIFLQGEKLLKKSGYKKYEISSYSKTNYQCLHNLNYWKFGDYLGIGCNAHGKITQKNGKIIKTIKNKNLKKFMNGKYTYKNHIISKKNLSLEFFMNRLRLNTPIYRKDFKKYTYISEFYIKNEIKQAIEQNYLIETKKYWKMTSKGIQFLDSLLEIFIT.

Residues 1–231 (MKLLGLYINI…EKLLKKSGYK (231 aa)) form the Radical SAM core domain.

This sequence belongs to the anaerobic coproporphyrinogen-III oxidase family. HemW subfamily.

It is found in the cytoplasm. Its function is as follows. Might be a heme chaperone; in E.coli heme binds independently of binding to [4Fe-4S] or S-adenosyl-L-methionine. The polypeptide is Putative heme chaperone HemW-like protein (Buchnera aphidicola subsp. Baizongia pistaciae (strain Bp)).